The primary structure comprises 73 residues: UPF0235 protein SYO3AOP1_0257 (73 aa).

This sequence belongs to the UPF0235 family.

This Sulfurihydrogenibium sp. (strain YO3AOP1) protein is UPF0235 protein SYO3AOP1_0257.